The sequence spans 497 residues: Endoglucanase 17 (497 aa).

The N-terminal stretch at 1-21 (MAAAGGAVLLLVLATATSVTG) is a signal peptide. Aspartate 77 functions as the Nucleophile in the catalytic mechanism. Histidine 406 is a catalytic residue. N-linked (GlcNAc...) asparagine glycosylation occurs at asparagine 451. Active-site residues include aspartate 458 and glutamate 467.

This sequence belongs to the glycosyl hydrolase 9 (cellulase E) family.

It is found in the secreted. The enzyme catalyses Endohydrolysis of (1-&gt;4)-beta-D-glucosidic linkages in cellulose, lichenin and cereal beta-D-glucans.. The polypeptide is Endoglucanase 17 (GLU13) (Oryza sativa subsp. japonica (Rice)).